A 445-amino-acid polypeptide reads, in one-letter code: UDP-N-acetylmuramoylalanine--D-glutamate ligase (445 aa).

126-132 provides a ligand contact to ATP; sequence GTSGKTT.

It belongs to the MurCDEF family.

It is found in the cytoplasm. The catalysed reaction is UDP-N-acetyl-alpha-D-muramoyl-L-alanine + D-glutamate + ATP = UDP-N-acetyl-alpha-D-muramoyl-L-alanyl-D-glutamate + ADP + phosphate + H(+). The protein operates within cell wall biogenesis; peptidoglycan biosynthesis. Cell wall formation. Catalyzes the addition of glutamate to the nucleotide precursor UDP-N-acetylmuramoyl-L-alanine (UMA). This chain is UDP-N-acetylmuramoylalanine--D-glutamate ligase, found in Nitratidesulfovibrio vulgaris (strain DSM 19637 / Miyazaki F) (Desulfovibrio vulgaris).